A 444-amino-acid polypeptide reads, in one-letter code: Homogentisate 1,2-dioxygenase (444 aa).

Catalysis depends on histidine 298, which acts as the Proton acceptor. Positions 341 and 347 each coordinate Fe cation. Residues tyrosine 356 and histidine 377 each contribute to the homogentisate site. Histidine 377 contacts Fe cation.

Belongs to the homogentisate dioxygenase family. As to quaternary structure, hexamer; dimer of trimers. It depends on Fe cation as a cofactor.

It carries out the reaction homogentisate + O2 = 4-maleylacetoacetate + H(+). It participates in amino-acid degradation; L-phenylalanine degradation; acetoacetate and fumarate from L-phenylalanine: step 4/6. Its function is as follows. Involved in the catabolism of homogentisate (2,5-dihydroxyphenylacetate or 2,5-OH-PhAc), a central intermediate in the degradation of phenylalanine and tyrosine. Catalyzes the oxidative ring cleavage of the aromatic ring of homogentisate to yield maleylacetoacetate. This chain is Homogentisate 1,2-dioxygenase, found in Burkholderia lata (strain ATCC 17760 / DSM 23089 / LMG 22485 / NCIMB 9086 / R18194 / 383).